A 260-amino-acid chain; its full sequence is Zinc finger protein 575 (260 aa).

The disordered stretch occupies residues Pro-22 to Pro-81. Residues Pro-51 to Ala-64 are compositionally biased toward low complexity. The segment covering Arg-67 to His-78 has biased composition (basic residues). C2H2-type zinc fingers lie at residues His-78–His-100, His-106–His-128, His-134–His-156, Tyr-162–His-184, Tyr-192–His-214, and His-228–His-255.

This sequence belongs to the krueppel C2H2-type zinc-finger protein family.

It is found in the nucleus. Its function is as follows. May be involved in transcriptional regulation. The chain is Zinc finger protein 575 (ZNF575) from Macaca fascicularis (Crab-eating macaque).